A 62-amino-acid chain; its full sequence is uncharacterized protein (62 aa).

Residues 17-62 (YNNYNNNNNNNNNNNNNNNNNNNNNNNNNNNNNNNNNNNNNNKNNN) are disordered.

This is an uncharacterized protein from Dictyostelium discoideum (Social amoeba).